Consider the following 615-residue polypeptide: Peptidoglycan-binding protein YepA (615 aa).

The signal sequence occupies residues 1–26 (MRNLAALLPALFLLGSSLLPAGTALA).

It belongs to the bacterial solute-binding protein 5 family. The complex is composed of one ATP-binding protein (YejF), two transmembrane proteins (YejB and YejE) and a solute-binding protein (YepA).

It localises to the periplasm. Its function is as follows. Part of the ABC transporter complex YejBEF-YepA involved in the uptake of muropeptides, the breakdown products of cell wall peptidoglycan. The import of muropeptides into the cell enables peptidoglycan recycling, which is vital for cell wall integrity in this bacterium. Probably binds muropeptides. This Agrobacterium fabrum (strain C58 / ATCC 33970) (Agrobacterium tumefaciens (strain C58)) protein is Peptidoglycan-binding protein YepA.